A 379-amino-acid polypeptide reads, in one-letter code: MAGNSFGTLFRFTTFGESHGPAIGCIVDGVPPRLPLDEAFIQGFLDRRRPGQSRFVTQRQEPDAVRILSGVFEGLTTGTPVMLEIVNQDQRSRDYGEIRDRFRPGHADWTYQAKYGIRDHRGGGRSSARETASRVAAGAVARRVLETAPAPVTVRGALVQVGPHRVDRARWDWAEVERNPFFCPDAGTAALWADYLDGVRKAGSSIGAVVEVVASGVPAGWGEPIYDKLDGDLARAMMTINAVKGVEIGAGFAAAELSGEENADEMRAGPDGQPLFLSNRAGGILGGISTGQDIVVRFAVKPTSSILTPRRTIDTAGHETEIVTKGRHDPCVGIRAVPVGEAMMACVLADHFLRHRALVGAPGPVGNGGPVEDGDPVGG.

Residues arginine 48 and arginine 54 each coordinate NADP(+). FMN contacts are provided by residues 125 to 127 (RSS), 241 to 242 (NA), glycine 286, 301 to 305 (KPTSS), and arginine 327.

Belongs to the chorismate synthase family. Homotetramer. Requires FMNH2 as cofactor.

The enzyme catalyses 5-O-(1-carboxyvinyl)-3-phosphoshikimate = chorismate + phosphate. The protein operates within metabolic intermediate biosynthesis; chorismate biosynthesis; chorismate from D-erythrose 4-phosphate and phosphoenolpyruvate: step 7/7. Its function is as follows. Catalyzes the anti-1,4-elimination of the C-3 phosphate and the C-6 proR hydrogen from 5-enolpyruvylshikimate-3-phosphate (EPSP) to yield chorismate, which is the branch point compound that serves as the starting substrate for the three terminal pathways of aromatic amino acid biosynthesis. This reaction introduces a second double bond into the aromatic ring system. The sequence is that of Chorismate synthase from Rhodospirillum centenum (strain ATCC 51521 / SW).